The primary structure comprises 250 residues: Probable transcriptional regulatory protein Emin_1151 (250 aa).

The protein belongs to the TACO1 family.

It is found in the cytoplasm. In Elusimicrobium minutum (strain Pei191), this protein is Probable transcriptional regulatory protein Emin_1151.